A 285-amino-acid chain; its full sequence is Glycine--tRNA ligase alpha subunit (285 aa).

The protein belongs to the class-II aminoacyl-tRNA synthetase family. In terms of assembly, tetramer of two alpha and two beta subunits.

Its subcellular location is the cytoplasm. The enzyme catalyses tRNA(Gly) + glycine + ATP = glycyl-tRNA(Gly) + AMP + diphosphate. The chain is Glycine--tRNA ligase alpha subunit from Granulibacter bethesdensis (strain ATCC BAA-1260 / CGDNIH1).